A 107-amino-acid chain; its full sequence is DNA-directed RNA polymerase subunit omega (107 aa).

A disordered region spans residues 81–107; sequence MEEEAAKGNADAGQGEGDAPKTPGQDG.

The protein belongs to the RNA polymerase subunit omega family. The RNAP catalytic core consists of 2 alpha, 1 beta, 1 beta' and 1 omega subunit. When a sigma factor is associated with the core the holoenzyme is formed, which can initiate transcription.

The catalysed reaction is RNA(n) + a ribonucleoside 5'-triphosphate = RNA(n+1) + diphosphate. Functionally, promotes RNA polymerase assembly. Latches the N- and C-terminal regions of the beta' subunit thereby facilitating its interaction with the beta and alpha subunits. In Alkalilimnicola ehrlichii (strain ATCC BAA-1101 / DSM 17681 / MLHE-1), this protein is DNA-directed RNA polymerase subunit omega.